Consider the following 61-residue polypeptide: Photosystem II reaction center protein Z (61 aa).

Helical transmembrane passes span 5–25 (LTALLVLISLGLIVTVPVALA) and 38–58 (TKGFQAWVALVLVIAAADGVA).

Belongs to the PsbZ family. In terms of assembly, PSII is composed of 1 copy each of membrane proteins PsbA, PsbB, PsbC, PsbD, PsbE, PsbF, PsbH, PsbI, PsbJ, PsbK, PsbL, PsbM, PsbT, PsbX, PsbY, PsbZ, Psb30/Ycf12, at least 3 peripheral proteins of the oxygen-evolving complex and a large number of cofactors. It forms dimeric complexes.

Its subcellular location is the plastid. The protein resides in the chloroplast thylakoid membrane. Functionally, may control the interaction of photosystem II (PSII) cores with the light-harvesting antenna, regulates electron flow through the 2 photosystem reaction centers. PSII is a light-driven water plastoquinone oxidoreductase, using light energy to abstract electrons from H(2)O, generating a proton gradient subsequently used for ATP formation. The sequence is that of Photosystem II reaction center protein Z from Phaeodactylum tricornutum (strain CCAP 1055/1).